We begin with the raw amino-acid sequence, 182 residues long: Dynactin subunit 5 (182 aa).

An N-acetylmethionine modification is found at methionine 1.

Belongs to the dynactin subunits 5/6 family. Dynactin subunit 5 subfamily. In terms of assembly, subunit of dynactin, a multiprotein complex part of a tripartite complex with dynein and a adapter, such as BICDL1, BICD2 or HOOK3. The dynactin complex is built around ACTR1A/ACTB filament and consists of an actin-related filament composed of a shoulder domain, a pointed end and a barbed end. Its length is defined by its flexible shoulder domain. The soulder is composed of 2 DCTN1 subunits, 4 DCTN2 and 2 DCTN3. The 4 DCNT2 (via N-terminus) bind the ACTR1A filament and act as molecular rulers to determine the length. The pointed end is important for binding dynein-dynactin cargo adapters. Consists of 4 subunits: ACTR10, DCNT4, DCTN5 and DCTN6. Within the complex DCTN6 forms a heterodimer with DCTN5. The barbed end is composed of a CAPZA1:CAPZB heterodimers, which binds ACTR1A/ACTB filament and dynactin and stabilizes dynactin. Interacts with N4BP2L1.

The protein localises to the cytoplasm. It is found in the cytoskeleton. Its subcellular location is the chromosome. It localises to the centromere. The protein resides in the kinetochore. Its function is as follows. Part of the dynactin complex that activates the molecular motor dynein for ultra-processive transport along microtubules. The sequence is that of Dynactin subunit 5 from Homo sapiens (Human).